Reading from the N-terminus, the 102-residue chain is COX assembly mitochondrial protein 2 homolog (102 aa).

Residues Thr11–Arg55 enclose the CHCH domain. 2 short sequence motifs (cx9C motif) span residues Cys14–Cys24 and Cys37–Cys47. 2 disulfides stabilise this stretch: Cys14-Cys47 and Cys24-Cys37.

It belongs to the CMC family.

The protein localises to the mitochondrion. Its function is as follows. May be involved in cytochrome c oxidase biogenesis. The sequence is that of COX assembly mitochondrial protein 2 homolog from Caenorhabditis elegans.